We begin with the raw amino-acid sequence, 106 residues long: UPF0473 protein LSEI_0788 (106 aa).

It belongs to the UPF0473 family.

This Lacticaseibacillus paracasei (strain ATCC 334 / BCRC 17002 / CCUG 31169 / CIP 107868 / KCTC 3260 / NRRL B-441) (Lactobacillus paracasei) protein is UPF0473 protein LSEI_0788.